We begin with the raw amino-acid sequence, 455 residues long: Retinoic acid receptor beta (455 aa).

The modulating stretch occupies residues 1–87 (MTTSGHACPV…PLPPPRVYKP (87 aa)). Residues 47 to 78 (HPPPSGCSTPSPATIETQSTSSEELVPSPPSP) form a disordered region. The segment covering 53 to 66 (CSTPSPATIETQST) has biased composition (polar residues). Residue S77 is modified to Phosphoserine. 2 NR C4-type zinc fingers span residues 88-108 (CFVC…CEGC) and 124-148 (CHRD…LQKC). Residues 88–153 (CFVCQDKSSG…RLQKCFEVGM (66 aa)) constitute a DNA-binding region (nuclear receptor). The tract at residues 154-182 (SKESVRNDRNKKKKETSKQECTESYEMTA) is hinge. Residues 183–417 (ELDDLTEKIR…PLIQEMLENS (235 aa)) enclose the NR LBD domain. Positions 415–455 (ENSEGHEPLTPSSSGNTAEHSPSISPSSVENSGVSQSPLVQ) are disordered. A compositionally biased stretch (polar residues) spans 424 to 434 (TPSSSGNTAEH). Residues 435–455 (SPSISPSSVENSGVSQSPLVQ) show a composition bias toward low complexity.

Belongs to the nuclear hormone receptor family. NR1 subfamily. In terms of assembly, homodimer. Heterodimer; with a RXR molecule. Binds DNA preferentially as a RAR/RXR heterodimer. Heterodimerizes (via NR LBD) with RXRA. Interacts weakly with NCOR2. As to expression, expressed in aortic endothelial cells (at protein level).

The protein resides in the nucleus. The protein localises to the cytoplasm. Functionally, receptor for retinoic acid. Retinoic acid receptors bind as heterodimers to their target response elements in response to their ligands, all-trans or 9-cis retinoic acid, and regulate gene expression in various biological processes. The RXR/RAR heterodimers bind to the retinoic acid response elements (RARE) composed of tandem 5'-AGGTCA-3' sites known as DR1-DR5. In the absence or presence of hormone ligand, acts mainly as an activator of gene expression due to weak binding to corepressors. The RXRA/RARB heterodimer can act as a repressor on the DR1 element and as an activator on the DR5 element. In concert with RARG, required for skeletal growth, matrix homeostasis and growth plate function. This is Retinoic acid receptor beta (RARB) from Homo sapiens (Human).